The primary structure comprises 319 residues: Acetyl-coenzyme A carboxylase carboxyl transferase subunit alpha (319 aa).

Residues 35–296 (NIDEEVHRLR…KAQLLEDLAD (262 aa)) form the CoA carboxyltransferase C-terminal domain.

It belongs to the AccA family. In terms of assembly, acetyl-CoA carboxylase is a heterohexamer composed of biotin carboxyl carrier protein (AccB), biotin carboxylase (AccC) and two subunits each of ACCase subunit alpha (AccA) and ACCase subunit beta (AccD).

It is found in the cytoplasm. It carries out the reaction N(6)-carboxybiotinyl-L-lysyl-[protein] + acetyl-CoA = N(6)-biotinyl-L-lysyl-[protein] + malonyl-CoA. It functions in the pathway lipid metabolism; malonyl-CoA biosynthesis; malonyl-CoA from acetyl-CoA: step 1/1. Its function is as follows. Component of the acetyl coenzyme A carboxylase (ACC) complex. First, biotin carboxylase catalyzes the carboxylation of biotin on its carrier protein (BCCP) and then the CO(2) group is transferred by the carboxyltransferase to acetyl-CoA to form malonyl-CoA. The sequence is that of Acetyl-coenzyme A carboxylase carboxyl transferase subunit alpha from Salmonella agona (strain SL483).